A 619-amino-acid polypeptide reads, in one-letter code: Zinc finger protein 131 (619 aa).

The BTB domain occupies 34-98 (TDITLIVDGH…TYTAKLMIQG (65 aa)). The Nuclear localization signal 1 signature appears at 137–148 (TGKNEAKKRKIA). Position 231 is a phosphoserine (Ser231). 3 consecutive C2H2-type zinc fingers follow at residues 261–283 (FHCEKCNRSFKLFYHFKEHMKSH), 288–311 (FKCEICNKRYLRESAWKQHLNCYH), and 328–350 (HICQYCDKQFDHFGHFKEHLRKH). Glycyl lysine isopeptide (Lys-Gly) (interchain with G-Cter in SUMO2) cross-links involve residues Lys289 and Lys295. Positions 317–328 (VSKKQRTGKKIH) match the Nuclear localization signal 2 motif. A C2H2-type 4; degenerate zinc finger spans residues 356–381 (FECSNCHERFARNSTLKCHLTACQTG). 2 C2H2-type zinc fingers span residues 392–414 (YECQVCNSVFNSWDQFKDHLVIH) and 420–443 (NHCTLCDLWFMQGNELRRHLSDAH). 2 stretches are compositionally biased toward basic and acidic residues: residues 574-587 (QEEREPNHADAAME) and 595-612 (LETKPSEYSQARKTENDR). The interval 574-619 (QEEREPNHADAAMEEHEDAEGLETKPSEYSQARKTENDRTSLPVLE) is disordered. Lys598 is covalently cross-linked (Glycyl lysine isopeptide (Lys-Gly) (interchain with G-Cter in SUMO)).

This sequence belongs to the krueppel C2H2-type zinc-finger protein family. In terms of processing, monosumoylated at Lys-598 by CBX4 and UHRF2. Sumoylation may potentiate ZNF131 inhibition of estrogen signaling. Sumoylation does not interfere with ubiquitination. Post-translationally, ubiquitinated. Ubiquitously expressed. Predominant expression is found in the developing central nervous system with strongest signals in the forebrain, midbrain, and hindbrain areas and in the neural tube.

Its subcellular location is the nucleus. Its function is as follows. May be involved in transcriptional regulation as a repressor of ESR1/ER-alpha signaling. Plays a role during development and organogenesis as well as in the function of the adult central nervous system. The chain is Zinc finger protein 131 (Znf131) from Mus musculus (Mouse).